A 395-amino-acid chain; its full sequence is Putative pyridoxal phosphate-dependent acyltransferase (395 aa).

110 to 111 (GF) serves as a coordination point for pyridoxal 5'-phosphate. Residue histidine 135 coordinates substrate. Pyridoxal 5'-phosphate contacts are provided by residues serine 185, 210–213 (DDAH), and 240–243 (TLSK). Lysine 243 is modified (N6-(pyridoxal phosphate)lysine). Residue threonine 357 coordinates substrate.

This sequence belongs to the class-II pyridoxal-phosphate-dependent aminotransferase family. Homodimer. Pyridoxal 5'-phosphate serves as cofactor.

The polypeptide is Putative pyridoxal phosphate-dependent acyltransferase (Staphylococcus aureus (strain COL)).